The sequence spans 450 residues: Probable 1,4-beta-D-glucan cellobiohydrolase C (450 aa).

The N-terminal stretch at 1-19 (MKHLASSIALTLLLPAVQA) is a signal peptide. The CBM1 domain occupies 20-55 (QQTVWGQCGGQGWSGPTNCVAGAACSTLNPYYAQCI). 2 disulfides stabilise this stretch: Cys27–Cys44 and Cys38–Cys54. The tract at residues 59-90 (TATSTTLSTTTTTQTTTKPTTTGPTTSAPTVT) is thr-rich linker. The tract at residues 63 to 89 (TTLSTTTTTQTTTKPTTTGPTTSAPTV) is disordered. The segment at 91-450 (ASGNPFSGYQ…QLLTNANPSF (360 aa)) is catalytic. Asp180 is an active-site residue. 2 cysteine pairs are disulfide-bonded: Cys181-Cys240 and Cys372-Cys419. Asp226 functions as the Proton donor in the catalytic mechanism. The active-site Nucleophile is Asp405. Asn409 carries N-linked (GlcNAc...) asparagine glycosylation.

This sequence belongs to the glycosyl hydrolase 6 (cellulase B) family.

The protein resides in the secreted. It carries out the reaction Hydrolysis of (1-&gt;4)-beta-D-glucosidic linkages in cellulose and cellotetraose, releasing cellobiose from the non-reducing ends of the chains.. Functionally, the biological conversion of cellulose to glucose generally requires three types of hydrolytic enzymes: (1) Endoglucanases which cut internal beta-1,4-glucosidic bonds; (2) Exocellobiohydrolases that cut the disaccharide cellobiose from the non-reducing end of the cellulose polymer chain; (3) Beta-1,4-glucosidases which hydrolyze the cellobiose and other short cello-oligosaccharides to glucose. This chain is Probable 1,4-beta-D-glucan cellobiohydrolase C (cbhC), found in Neosartorya fischeri (strain ATCC 1020 / DSM 3700 / CBS 544.65 / FGSC A1164 / JCM 1740 / NRRL 181 / WB 181) (Aspergillus fischerianus).